Consider the following 763-residue polypeptide: Thiamine biosynthesis multifunctional protein ThiED (763 aa).

Residues 1–210 (MTDFSLYLVT…ANPAAAATRL (210 aa)) form a thiamine-phosphate synthase region. 4-amino-2-methyl-5-(diphosphooxymethyl)pyrimidine contacts are provided by residues 37-41 (QLRDK) and Asn-69. 2 residues coordinate Mg(2+): Asp-70 and Asp-88. Ser-107 provides a ligand contact to 4-amino-2-methyl-5-(diphosphooxymethyl)pyrimidine. 140-142 (TAT) serves as a coordination point for 2-[(2R,5Z)-2-carboxy-4-methylthiazol-5(2H)-ylidene]ethyl phosphate. Position 143 (Lys-143) interacts with 4-amino-2-methyl-5-(diphosphooxymethyl)pyrimidine. 2-[(2R,5Z)-2-carboxy-4-methylthiazol-5(2H)-ylidene]ethyl phosphate-binding positions include Gly-174 and 194–195 (VS). The segment at 245–500 (LSIAGTDPTG…GTGNGPVDHG (256 aa)) is hydroxymethylpyrimidine/phosphomethylpyrimidine kinase. Gln-282 serves as a coordination point for 4-amino-5-hydroxymethyl-2-methylpyrimidine. A thiaminase-2 region spans residues 550–763 (FTRALWEASG…RHGWTMVGSS (214 aa)).

It in the N-terminal section; belongs to the thiamine-phosphate synthase family. This sequence in the central section; belongs to the ThiD family. The protein in the C-terminal section; belongs to the thiaminase-2 family. Requires Mg(2+) as cofactor.

It catalyses the reaction 2-[(2R,5Z)-2-carboxy-4-methylthiazol-5(2H)-ylidene]ethyl phosphate + 4-amino-2-methyl-5-(diphosphooxymethyl)pyrimidine + 2 H(+) = thiamine phosphate + CO2 + diphosphate. It carries out the reaction 2-(2-carboxy-4-methylthiazol-5-yl)ethyl phosphate + 4-amino-2-methyl-5-(diphosphooxymethyl)pyrimidine + 2 H(+) = thiamine phosphate + CO2 + diphosphate. The enzyme catalyses 4-methyl-5-(2-phosphooxyethyl)-thiazole + 4-amino-2-methyl-5-(diphosphooxymethyl)pyrimidine + H(+) = thiamine phosphate + diphosphate. The catalysed reaction is 4-amino-5-hydroxymethyl-2-methylpyrimidine + ATP = 4-amino-2-methyl-5-(phosphooxymethyl)pyrimidine + ADP + H(+). It catalyses the reaction 4-amino-2-methyl-5-(phosphooxymethyl)pyrimidine + ATP = 4-amino-2-methyl-5-(diphosphooxymethyl)pyrimidine + ADP. The protein operates within cofactor biosynthesis; thiamine diphosphate biosynthesis; 4-amino-2-methyl-5-diphosphomethylpyrimidine from 5-amino-1-(5-phospho-D-ribosyl)imidazole: step 3/3. It participates in cofactor biosynthesis; thiamine diphosphate biosynthesis; thiamine phosphate from 4-amino-2-methyl-5-diphosphomethylpyrimidine and 4-methyl-5-(2-phosphoethyl)-thiazole: step 1/1. Functionally, condenses 4-methyl-5-(beta-hydroxyethyl)thiazole monophosphate (THZ-P) and 2-methyl-4-amino-5-hydroxymethyl pyrimidine pyrophosphate (HMP-PP) to form thiamine monophosphate (TMP). Its function is as follows. Catalyzes the phosphorylation of hydroxymethylpyrimidine phosphate (HMP-P) to HMP-PP, and of HMP to HMP-P. The polypeptide is Thiamine biosynthesis multifunctional protein ThiED (theD) (Corynebacterium glutamicum (strain ATCC 13032 / DSM 20300 / JCM 1318 / BCRC 11384 / CCUG 27702 / LMG 3730 / NBRC 12168 / NCIMB 10025 / NRRL B-2784 / 534)).